The following is a 247-amino-acid chain: 5'-nucleotidase SurE (247 aa).

A divalent metal cation is bound by residues aspartate 8, aspartate 9, serine 39, and asparagine 95.

This sequence belongs to the SurE nucleotidase family. A divalent metal cation serves as cofactor.

The protein resides in the cytoplasm. The enzyme catalyses a ribonucleoside 5'-phosphate + H2O = a ribonucleoside + phosphate. Functionally, nucleotidase that shows phosphatase activity on nucleoside 5'-monophosphates. The sequence is that of 5'-nucleotidase SurE from Thermotoga petrophila (strain ATCC BAA-488 / DSM 13995 / JCM 10881 / RKU-1).